A 315-amino-acid polypeptide reads, in one-letter code: Small ribosomal subunit protein uS9m (315 aa).

A mitochondrion-targeting transit peptide spans 1–42; the sequence is MMASLRHSITSALRSSRQGCSKSAQWQSLDQQFGALRISSRS. The tract at residues 293 to 315 is disordered; it reads PRKVERKKHGHVKARKMPTWVKR. Basic residues predominate over residues 296 to 315; that stretch reads VERKKHGHVKARKMPTWVKR.

The protein belongs to the universal ribosomal protein uS9 family. In terms of assembly, component of the mitochondrial small ribosomal subunit (mt-SSU). Mature N.crassa 74S mitochondrial ribosomes consist of a small (37S) and a large (54S) subunit. The 37S small subunit contains a 16S ribosomal RNA (16S mt-rRNA) and 32 different proteins. The 54S large subunit contains a 23S rRNA (23S mt-rRNA) and 42 different proteins.

Its subcellular location is the mitochondrion. Its function is as follows. Component of the mitochondrial ribosome (mitoribosome), a dedicated translation machinery responsible for the synthesis of mitochondrial genome-encoded proteins, including at least some of the essential transmembrane subunits of the mitochondrial respiratory chain. The mitoribosomes are attached to the mitochondrial inner membrane and translation products are cotranslationally integrated into the membrane. In Neurospora crassa (strain ATCC 24698 / 74-OR23-1A / CBS 708.71 / DSM 1257 / FGSC 987), this protein is Small ribosomal subunit protein uS9m (mrp-9).